A 533-amino-acid chain; its full sequence is GMP synthase [glutamine-hydrolyzing] (533 aa).

One can recognise a Glutamine amidotransferase type-1 domain in the interval 12–206; that stretch reads TILVLDFGSQ…AVGICGAEQK (195 aa). The Nucleophile role is filled by cysteine 88. Catalysis depends on residues histidine 180 and glutamate 182. The GMPS ATP-PPase domain occupies 207–408; the sequence is WTMAEFIGQE…LGISPELVGR (202 aa). 235–241 serves as a coordination point for ATP; sequence SGGVDST. XMP contacts are provided by arginine 308, aspartate 470, lysine 525, and glutamate 531.

As to quaternary structure, homodimer. The cofactor is Mg(2+).

It is found in the cytoplasm. The protein resides in the cytosol. It carries out the reaction XMP + L-glutamine + ATP + H2O = GMP + L-glutamate + AMP + diphosphate + 2 H(+). Its pathway is purine metabolism; GMP biosynthesis; GMP from XMP (L-Gln route): step 1/1. Functionally, catalyzes the conversion of xanthine monophosphate (XMP) to GMP in the presence of glutamine and ATP through an adenyl-XMP intermediate. The polypeptide is GMP synthase [glutamine-hydrolyzing] (gua1) (Emericella nidulans (strain FGSC A4 / ATCC 38163 / CBS 112.46 / NRRL 194 / M139) (Aspergillus nidulans)).